The chain runs to 712 residues: Glycine--tRNA ligase beta subunit (712 aa).

The protein belongs to the class-II aminoacyl-tRNA synthetase family. Tetramer of two alpha and two beta subunits.

Its subcellular location is the cytoplasm. The catalysed reaction is tRNA(Gly) + glycine + ATP = glycyl-tRNA(Gly) + AMP + diphosphate. In Acaryochloris marina (strain MBIC 11017), this protein is Glycine--tRNA ligase beta subunit.